Here is a 256-residue protein sequence, read N- to C-terminus: MAVGKNKRLSKGKKGLKKKVVDPFTRKDWFDIKAPTTFENRNVGKTLINRSTGLKNAADGLKGRVFEVCLADLQGSEDHSYRKIKLRVDEVQGKNLLTNFHGLDFTSDKLRSLVRKWQSLVEANVTVKTSDDYVLRVFAIAFTKRQPNQIKKTTYAQSSKLREVRKKMIEIMQREVSNCTLAQLTSKLIPEVIGREIEKSTQTIFPLQNVHIRKVKLLKQPKFDLGSLLALHGEGSTEEKGKKVSSGFKDVVLESV.

A2 is subject to N-acetylalanine; partial.

This sequence belongs to the eukaryotic ribosomal protein eS1 family. Component of the small ribosomal subunit. Mature ribosomes consist of a small (40S) and a large (60S) subunit. The 40S subunit contains about 33 different proteins and 1 molecule of RNA (18S). The 60S subunit contains about 49 different proteins and 3 molecules of RNA (25S, 5.8S and 5S).

It localises to the cytoplasm. This is Small ribosomal subunit protein eS1 from Candida albicans (strain SC5314 / ATCC MYA-2876) (Yeast).